The primary structure comprises 713 residues: Methionine--tRNA ligase (713 aa).

A 'HIGH' region motif is present at residues 17 to 27 (PYANGPIHIGH). Cys-149, Cys-152, Cys-162, and Cys-165 together coordinate Zn(2+). Positions 345-349 (KLSTS) match the 'KMSKS' region motif. Thr-348 is a binding site for ATP. The tract at residues 530–564 (VRTSTPDDDPAGAVGWEDAGAPLLPAGHPIPSGPD) is disordered. The tRNA-binding domain occupies 614-713 (DFTQLDLRAG…TEAEDGSVVR (100 aa)).

Belongs to the class-I aminoacyl-tRNA synthetase family. MetG type 1 subfamily. Homodimer. The cofactor is Zn(2+).

It localises to the cytoplasm. It carries out the reaction tRNA(Met) + L-methionine + ATP = L-methionyl-tRNA(Met) + AMP + diphosphate. Functionally, is required not only for elongation of protein synthesis but also for the initiation of all mRNA translation through initiator tRNA(fMet) aminoacylation. This is Methionine--tRNA ligase from Salinibacter ruber (strain DSM 13855 / M31).